Here is a 684-residue protein sequence, read N- to C-terminus: Protein EXECUTER 1, chloroplastic (684 aa).

Polar residues predominate over residues methionine 1 to arginine 31. The transit peptide at methionine 1 to arginine 46 directs the protein to the chloroplast. Residues methionine 1–arginine 66 form a disordered region. Residues serine 48–serine 61 show a composition bias toward low complexity. Positions aspartate 127–asparagine 162 constitute a UVR domain. The segment at threonine 278–glutamate 318 is disordered. Acidic residues predominate over residues serine 301–glutamate 318.

It localises to the plastid. The protein resides in the chloroplast. In terms of biological role, together with EX2, enables higher plants to perceive singlet oxygen as a stress signal in plastid that activates a genetically determined nuclear stress response program which triggers a programmed cell death (PCD). This transfer of singlet oxygen-induced stress-related signals from the plastid to the nucleus that triggers genetically controlled PCD pathway is unique to photosynthetic eukaryotes and operates under mild stress conditions, impeding photosystem II (PSII) without causing photooxidative damage of the plant. This is Protein EXECUTER 1, chloroplastic from Arabidopsis thaliana (Mouse-ear cress).